The primary structure comprises 551 residues: GMP synthase [glutamine-hydrolyzing] (551 aa).

The interval 1–28 (MTSSPTAAARTEGEAAPTVPTQVESGTA) is disordered. The span at 19-28 (VPTQVESGTA) shows a compositional bias: polar residues. A Glutamine amidotransferase type-1 domain is found at 37–227 (MVAILDFGSQ…VYHICGCEPE (191 aa)). Cys114 serves as the catalytic Nucleophile. Catalysis depends on residues His201 and Glu203. In terms of domain architecture, GMPS ATP-PPase spans 228-426 (WTTAAFIEEA…LGLPEEIVQR (199 aa)). ATP is bound at residue 255–261 (SGGVDSS).

Homodimer.

It carries out the reaction XMP + L-glutamine + ATP + H2O = GMP + L-glutamate + AMP + diphosphate + 2 H(+). It participates in purine metabolism; GMP biosynthesis; GMP from XMP (L-Gln route): step 1/1. Catalyzes the synthesis of GMP from XMP. The sequence is that of GMP synthase [glutamine-hydrolyzing] from Gloeobacter violaceus (strain ATCC 29082 / PCC 7421).